The primary structure comprises 37 residues: Omega-sparatoxin-Hv1a (37 aa).

Intrachain disulfides connect C4–C18, C11–C23, and C17–C33.

Expressed by the venom gland.

The protein resides in the secreted. Its function is as follows. Blocks calcium channels (Cav). The protein is Omega-sparatoxin-Hv1a of Heteropoda venatoria (Brown huntsman spider).